The sequence spans 599 residues: Putative sensor histidine kinase NtrY-like (599 aa).

4 consecutive transmembrane segments (helical) span residues Ile17 to Ile37, Phe44 to Leu64, Ile85 to Val105, and Ile285 to Phe305. Positions Ala307–Arg361 constitute an HAMP domain. The Histidine kinase domain occupies Lys378–Glu589. His381 carries the post-translational modification Phosphohistidine; by autocatalysis.

The protein localises to the cell membrane. It carries out the reaction ATP + protein L-histidine = ADP + protein N-phospho-L-histidine.. Functionally, member of the two-component regulatory system RP614/RP562. The polypeptide is Putative sensor histidine kinase NtrY-like (Rickettsia prowazekii (strain Madrid E)).